The following is a 553-amino-acid chain: CDP-diacylglycerol--glycerol-3-phosphate 3-phosphatidyltransferase, mitochondrial (553 aa).

The transit peptide at 1-25 (MAAPAAGPVFWRRLLGLLPGRPGLA) directs the protein to the mitochondrion. S46 bears the Phosphoserine mark. Position 121-128 (121-128 (ASLYLGTG)) interacts with ATP. PLD phosphodiesterase domains are found at residues 212–238 (TIGL…SDSY) and 457–490 (RGWT…GYRS). Active-site residues include H217, K219, and D224.

This sequence belongs to the CDP-alcohol phosphatidyltransferase class-II family. In terms of tissue distribution, widely expressed with higher expression in testis, liver and brain.

It localises to the mitochondrion. It carries out the reaction a CDP-1,2-diacyl-sn-glycerol + sn-glycerol 3-phosphate = a 1,2-diacyl-sn-glycero-3-phospho-(1'-sn-glycero-3'-phosphate) + CMP + H(+). Its pathway is phospholipid metabolism; phosphatidylglycerol biosynthesis; phosphatidylglycerol from CDP-diacylglycerol: step 1/2. With respect to regulation, activated by calcium and magnesium and inhibited by other bivalent cations. Functions in the biosynthesis of the anionic phospholipids phosphatidylglycerol and cardiolipin. In Mus musculus (Mouse), this protein is CDP-diacylglycerol--glycerol-3-phosphate 3-phosphatidyltransferase, mitochondrial (Pgs1).